The primary structure comprises 315 residues: MSQISSLRHITVLLDEAVAALNVRADGRYLDGTFGRGGHSRLLLQQLGPNGQLLGFDKDPLAIATGQALAAEDGRFVVVQRSFAELGDEVAQRGWTGAVSGILLDLGVSSPQLDDPIRGFSFLNDGPLDMRMDPSRGVSAAEWIASADEDEIARVFKDYGEERFAKRMARAVVQRRAEAPFERTADLAKVLTDANPAWEKGKSPATRAFQGLRIHINNELGDLERGLDAALDALEVGGRLVVISFHSLEDRIVKQFMRRHAKGEADKLPRDLPIIPKAFEPRLKLIGKPQYASEAEVKANPRSRSAVMRVAEKVR.

S-adenosyl-L-methionine contacts are provided by residues 37–39 (GGH), aspartate 57, phenylalanine 83, aspartate 105, and glutamine 112. Positions 296–315 (EVKANPRSRSAVMRVAEKVR) are disordered.

Belongs to the methyltransferase superfamily. RsmH family.

It is found in the cytoplasm. It catalyses the reaction cytidine(1402) in 16S rRNA + S-adenosyl-L-methionine = N(4)-methylcytidine(1402) in 16S rRNA + S-adenosyl-L-homocysteine + H(+). Its function is as follows. Specifically methylates the N4 position of cytidine in position 1402 (C1402) of 16S rRNA. This chain is Ribosomal RNA small subunit methyltransferase H, found in Stutzerimonas stutzeri (strain A1501) (Pseudomonas stutzeri).